Reading from the N-terminus, the 730-residue chain is Stonin-1 (730 aa).

3 disordered regions span residues 1 to 26, 38 to 83, and 132 to 159; these read MYST…KRKD, NGLK…PLST, and SPHV…AGPQ. Composition is skewed to low complexity over residues 54–65 and 132–143; these read PSSASSTPLSSP and SPHVSLPSSHSH. The 134-residue stretch at 269–402 folds into the SHD domain; it reads GWSFMLRIPE…KLPATAKPKN (134 aa). The region spanning 407-710 is the MHD domain; sequence EQEICLDIQD…ACYNIQVEIE (304 aa).

Belongs to the Stoned B family.

Its subcellular location is the cytoplasm. The protein localises to the membrane. Functionally, may be involved in the endocytic machinery. The chain is Stonin-1 (Ston1) from Mus musculus (Mouse).